A 919-amino-acid chain; its full sequence is Probable dipeptidyl-aminopeptidase B (919 aa).

Positions methionine 1 to threonine 10 are enriched in basic and acidic residues. The segment at methionine 1–valine 50 is disordered. Residues methionine 1–arginine 92 are Cytoplasmic-facing. Residues serine 21–serine 38 show a composition bias toward low complexity. Residues isoleucine 93–leucine 113 form a helical; Signal-anchor for type II membrane protein membrane-spanning segment. The Vacuolar portion of the chain corresponds to threonine 114–proline 919. N-linked (GlcNAc...) asparagine glycosylation is found at asparagine 200, asparagine 352, and asparagine 643. Serine 757 serves as the catalytic Charge relay system. Asparagine 811 is a glycosylation site (N-linked (GlcNAc...) asparagine). Catalysis depends on charge relay system residues aspartate 834 and histidine 867.

The protein belongs to the peptidase S9B family.

It localises to the vacuole membrane. The catalysed reaction is Release of an N-terminal dipeptide, Xaa-Yaa-|-Zaa-, from a polypeptide, preferentially when Yaa is Pro, provided Zaa is neither Pro nor hydroxyproline.. In terms of biological role, type IV dipeptidyl-peptidase which removes N-terminal dipeptides sequentially from polypeptides having unsubstituted N-termini provided that the penultimate residue is proline. This is Probable dipeptidyl-aminopeptidase B (dapB) from Neosartorya fischeri (strain ATCC 1020 / DSM 3700 / CBS 544.65 / FGSC A1164 / JCM 1740 / NRRL 181 / WB 181) (Aspergillus fischerianus).